A 431-amino-acid chain; its full sequence is Adenylosuccinate synthetase (431 aa).

Residues 15–21 and 43–45 each bind GTP; these read GDEGKGK and GHT. The active-site Proton acceptor is the Asp-16. The Mg(2+) site is built by Asp-16 and Gly-43. IMP contacts are provided by residues 16–19, 41–44, Thr-135, Arg-149, Asn-227, Thr-242, and Arg-306; these read DEGK and NAGH. The active-site Proton donor is His-44. 302-308 provides a ligand contact to substrate; the sequence is VTTGRKR. Residues Arg-308, 334–336, and 416–418 contribute to the GTP site; these read KLD and GVG.

It belongs to the adenylosuccinate synthetase family. In terms of assembly, homodimer. It depends on Mg(2+) as a cofactor.

The protein localises to the cytoplasm. The enzyme catalyses IMP + L-aspartate + GTP = N(6)-(1,2-dicarboxyethyl)-AMP + GDP + phosphate + 2 H(+). It participates in purine metabolism; AMP biosynthesis via de novo pathway; AMP from IMP: step 1/2. Plays an important role in the de novo pathway and in the salvage pathway of purine nucleotide biosynthesis. Catalyzes the first committed step in the biosynthesis of AMP from IMP. This Monosiga brevicollis (Choanoflagellate) protein is Adenylosuccinate synthetase.